The primary structure comprises 807 residues: Leucine-rich repeat-containing protein 41 (807 aa).

An interaction with Elongin BC complex region spans residues A45–V54. Residues S155, S276, and S326 each carry the phosphoserine modification. 3 disordered regions span residues A269–R290, T304–G335, and A349–A403. Phosphothreonine is present on T327. Residues T352–K381 are compositionally biased toward low complexity. At S368 the chain carries Phosphoserine. Residues P382–R396 are compositionally biased toward basic residues. 7 LRR repeats span residues W482–L502, A513–L525, F526–I550, S608–Q632, N638–L661, N696–E723, and S726–F747.

Part of an E3 ubiquitin-protein ligase complex with Elongin BC (ELOB and ELOC), RBX1 and CUL5. Component of a probable ECS(LRRC41) complex which contains CUL5, RNF7/RBX2, Elongin BC and LRRC41. Interacts with CUL5, RNF7, ELOB and ELOC.

It functions in the pathway protein modification; protein ubiquitination. Functionally, probable substrate recognition component of an ECS (Elongin BC-CUL2/5-SOCS-box protein) E3 ubiquitin ligase complex which mediates the ubiquitination and subsequent proteasomal degradation of target proteins. This is Leucine-rich repeat-containing protein 41 (Lrrc41) from Mus musculus (Mouse).